A 270-amino-acid polypeptide reads, in one-letter code: Putative phosphoenolpyruvate synthase regulatory protein (270 aa).

150 to 157 provides a ligand contact to ADP; sequence GVSRCGKT.

Belongs to the pyruvate, phosphate/water dikinase regulatory protein family. PSRP subfamily.

It carries out the reaction [pyruvate, water dikinase] + ADP = [pyruvate, water dikinase]-phosphate + AMP + H(+). It catalyses the reaction [pyruvate, water dikinase]-phosphate + phosphate + H(+) = [pyruvate, water dikinase] + diphosphate. In terms of biological role, bifunctional serine/threonine kinase and phosphorylase involved in the regulation of the phosphoenolpyruvate synthase (PEPS) by catalyzing its phosphorylation/dephosphorylation. The sequence is that of Putative phosphoenolpyruvate synthase regulatory protein from Shewanella halifaxensis (strain HAW-EB4).